The primary structure comprises 150 residues: Large ribosomal subunit protein uL13 (150 aa).

Belongs to the universal ribosomal protein uL13 family. As to quaternary structure, part of the 50S ribosomal subunit.

Functionally, this protein is one of the early assembly proteins of the 50S ribosomal subunit, although it is not seen to bind rRNA by itself. It is important during the early stages of 50S assembly. The protein is Large ribosomal subunit protein uL13 of Chlamydia abortus (strain DSM 27085 / S26/3) (Chlamydophila abortus).